Consider the following 514-residue polypeptide: Peptide chain release factor 3 (514 aa).

One can recognise a tr-type G domain in the interval 8 to 268 (KKRRTFAIIS…TFLEFAPEPH (261 aa)). Residues 17–24 (SHPDAGKT), 85–89 (DTPGH), and 139–142 (NKLD) each bind GTP.

It belongs to the TRAFAC class translation factor GTPase superfamily. Classic translation factor GTPase family. PrfC subfamily.

Its subcellular location is the cytoplasm. Functionally, increases the formation of ribosomal termination complexes and stimulates activities of RF-1 and RF-2. It binds guanine nucleotides and has strong preference for UGA stop codons. It may interact directly with the ribosome. The stimulation of RF-1 and RF-2 is significantly reduced by GTP and GDP, but not by GMP. The sequence is that of Peptide chain release factor 3 from Streptococcus uberis (strain ATCC BAA-854 / 0140J).